The following is an 880-amino-acid chain: MKQLTGAQIRQMFLDFFQEKGHAVEPSASLVPHEDPSLLWINSGVATLKKYFDGRVIPQNPRITNAQKSIRTNDIENVGKTARHHTFFEMLGNFSIGDYFKEEAITWAWEFLTSDKWIGFDKELLSVTIHPEDEEAFTIWNEKMGVPKERIIRLEENFWDIGEGPSGPNTEIFYDRGEAYGNDFSDPELYPGGENERYLEVWNLVFSQFNHNPDGSYTPLPKKNIDTGMGLERMTSIVQDVPTNFDTDLFMPMIGATETISGEKYRNGDLEKDMAFKVIADHIRTVTFAVGDGALPSNEGRGYVLRRLLRRAVRYSKKLNINRPFMFELVPVVGEVMKDFYPEVLEKKDFIAKVVKNEEERFHETLHDGEAILSEVIAKAKEEKTTVISGVDAFRLYDTYGFPIELTEEYAEEAGMTVDHEGFENEMEKQRERARAARQDVDSMQVQGGVLGEVKVASEFVGYGTVATESNVVALVKNGEYTDSLQVGEEGQLMLDVTPFYAESGGQIADRGCLLADGVKVLVKDVQKAPNGQNLHQVVVEEGTLTKDAAVKAIIDTKNRSSVVKNHTATHLLHQALKDVLGTHVNQAGSLVTSERLRFDFSHFGQVQADELEKIERIVNEKIWESIDVEISQKAIEEAKEMGAMALFGEKYGDVVRVVQVGDYSLELCGGCHVDNTASIGIFKIVAESGIGAGIRRIEAVTGKSAYELMNDQVGLLKEAAGKMKTNPKDILTRVDGLFAEVKQLQKENESLAAKLSNIEAGNLTDSVMTVDGVNVLAAKVNVADMNNLRTMMDDLKNKLESAVVVLASVNDDKVNILAGVTKDLISQGYHAGKLVKEVASRCGGGGGGRPDMAQAGGKNPAQVEEALAFVQEYVKSVSK.

The Zn(2+) site is built by His-567, His-571, Cys-669, and His-673.

The protein belongs to the class-II aminoacyl-tRNA synthetase family. It depends on Zn(2+) as a cofactor.

Its subcellular location is the cytoplasm. The enzyme catalyses tRNA(Ala) + L-alanine + ATP = L-alanyl-tRNA(Ala) + AMP + diphosphate. In terms of biological role, catalyzes the attachment of alanine to tRNA(Ala) in a two-step reaction: alanine is first activated by ATP to form Ala-AMP and then transferred to the acceptor end of tRNA(Ala). Also edits incorrectly charged Ser-tRNA(Ala) and Gly-tRNA(Ala) via its editing domain. The chain is Alanine--tRNA ligase from Bacillus anthracis.